A 407-amino-acid chain; its full sequence is 1-deoxy-D-xylulose 5-phosphate reductoisomerase (407 aa).

NADPH-binding residues include Thr-25, Gly-26, Ser-27, Ile-28, Asn-53, and Asn-136. Residue Lys-137 coordinates 1-deoxy-D-xylulose 5-phosphate. Glu-138 contributes to the NADPH binding site. Asp-162 lines the Mn(2+) pocket. Residues Ser-163, Glu-164, Ser-188, and His-211 each coordinate 1-deoxy-D-xylulose 5-phosphate. Glu-164 is a binding site for Mn(2+). Gly-217 is an NADPH binding site. Residues Ser-224, Asn-229, Lys-230, and Glu-233 each contribute to the 1-deoxy-D-xylulose 5-phosphate site. A Mn(2+)-binding site is contributed by Glu-233.

It belongs to the DXR family. It depends on Mg(2+) as a cofactor. Mn(2+) serves as cofactor.

It catalyses the reaction 2-C-methyl-D-erythritol 4-phosphate + NADP(+) = 1-deoxy-D-xylulose 5-phosphate + NADPH + H(+). The protein operates within isoprenoid biosynthesis; isopentenyl diphosphate biosynthesis via DXP pathway; isopentenyl diphosphate from 1-deoxy-D-xylulose 5-phosphate: step 1/6. Catalyzes the NADPH-dependent rearrangement and reduction of 1-deoxy-D-xylulose-5-phosphate (DXP) to 2-C-methyl-D-erythritol 4-phosphate (MEP). The sequence is that of 1-deoxy-D-xylulose 5-phosphate reductoisomerase from Rhodopseudomonas palustris (strain TIE-1).